We begin with the raw amino-acid sequence, 305 residues long: Oxygen-dependent coproporphyrinogen-III oxidase (305 aa).

Ser-99 contributes to the substrate binding site. A divalent metal cation contacts are provided by His-103 and His-113. His-113 acts as the Proton donor in catalysis. 115 to 117 lines the substrate pocket; that stretch reads NVR. The a divalent metal cation site is built by His-152 and His-182. Residues 247–282 form an important for dimerization region; sequence YVEFNLVLDRGTLFGLQTGGRTESILMSMPPLARWE. 265-267 lines the substrate pocket; that stretch reads GGR.

It belongs to the aerobic coproporphyrinogen-III oxidase family. In terms of assembly, homodimer. The cofactor is a divalent metal cation.

The protein localises to the cytoplasm. The enzyme catalyses coproporphyrinogen III + O2 + 2 H(+) = protoporphyrinogen IX + 2 CO2 + 2 H2O. The protein operates within porphyrin-containing compound metabolism; protoporphyrin-IX biosynthesis; protoporphyrinogen-IX from coproporphyrinogen-III (O2 route): step 1/1. Involved in the heme biosynthesis. Catalyzes the aerobic oxidative decarboxylation of propionate groups of rings A and B of coproporphyrinogen-III to yield the vinyl groups in protoporphyrinogen-IX. The polypeptide is Oxygen-dependent coproporphyrinogen-III oxidase (Vibrio cholerae serotype O1 (strain ATCC 39541 / Classical Ogawa 395 / O395)).